The primary structure comprises 310 residues: MKTLIRKFSRTAITVVLVILAFIAIFNAWVYYTESPWTRDARFSADVVAIAPDVSGLITQVNVHDNQLVKKGQILFTIDQPRYQKALEEAQADVAYYQVLAQEKRQEAGRRNRLGVQAMSREEIDQANNVLQTVLHQLAKAQATRDLAKLDLERTVIRAPADGWVTNLNVYTGEFITRGSTAVALVKQNSFYVLAYMEETKLEGVRPGYRAEITPLGSNKVLKGTVDSVAAGVTNASSTRDDKGMATIDSNLEWVRLAQRVPVRIRLDNQQENIWPAGTTATVVVTGKQDRDESQDSFFRKMAHRLREFG.

Residues 12–32 (AITVVLVILAFIAIFNAWVYY) form a helical membrane-spanning segment.

This sequence belongs to the membrane fusion protein (MFP) (TC 8.A.1) family.

The protein localises to the cell inner membrane. In terms of biological role, forms an efflux pump with AaeB. In Escherichia coli O139:H28 (strain E24377A / ETEC), this protein is p-hydroxybenzoic acid efflux pump subunit AaeA.